Reading from the N-terminus, the 427-residue chain is UPF0229 protein YeaH (427 aa).

The span at 79-90 (NDHFVQNDRIER) shows a compositional bias: basic and acidic residues. The interval 79–110 (NDHFVQNDRIERPQGGGGGSGSGQGQASQDGE) is disordered. Gly residues predominate over residues 92–102 (QGGGGGSGSGQ).

It belongs to the UPF0229 family.

The polypeptide is UPF0229 protein YeaH (Escherichia coli O139:H28 (strain E24377A / ETEC)).